The following is a 367-amino-acid chain: Queuine tRNA-ribosyltransferase (367 aa).

Asp91 serves as the catalytic Proton acceptor. Substrate contacts are provided by residues 91–95 (DSGGF), Asp145, Gln188, and Gly215. The active-site Nucleophile is Asp265. Residues 270–274 (TRVAR) are RNA binding; important for wobble base 34 recognition. Cys303, Cys305, Cys308, and His334 together coordinate Zn(2+).

The protein belongs to the queuine tRNA-ribosyltransferase family. As to quaternary structure, homodimer. Within each dimer, one monomer is responsible for RNA recognition and catalysis, while the other monomer binds to the replacement base PreQ1. It depends on Zn(2+) as a cofactor.

The catalysed reaction is 7-aminomethyl-7-carbaguanine + guanosine(34) in tRNA = 7-aminomethyl-7-carbaguanosine(34) in tRNA + guanine. Its pathway is tRNA modification; tRNA-queuosine biosynthesis. Functionally, catalyzes the base-exchange of a guanine (G) residue with the queuine precursor 7-aminomethyl-7-deazaguanine (PreQ1) at position 34 (anticodon wobble position) in tRNAs with GU(N) anticodons (tRNA-Asp, -Asn, -His and -Tyr). Catalysis occurs through a double-displacement mechanism. The nucleophile active site attacks the C1' of nucleotide 34 to detach the guanine base from the RNA, forming a covalent enzyme-RNA intermediate. The proton acceptor active site deprotonates the incoming PreQ1, allowing a nucleophilic attack on the C1' of the ribose to form the product. After dissociation, two additional enzymatic reactions on the tRNA convert PreQ1 to queuine (Q), resulting in the hypermodified nucleoside queuosine (7-(((4,5-cis-dihydroxy-2-cyclopenten-1-yl)amino)methyl)-7-deazaguanosine). The protein is Queuine tRNA-ribosyltransferase of Thermosipho africanus (strain TCF52B).